Here is a 750-residue protein sequence, read N- to C-terminus: Neprilysin (750 aa).

A compositionally biased stretch (polar residues) spans 1–14; that stretch reads MGKSESQMDITDIN. The tract at residues 1-20 is disordered; it reads MGKSESQMDITDINTPKPKK. Glycine 2 carries the N-myristoyl glycine lipid modification. Over 2-28 the chain is Cytoplasmic; that stretch reads GKSESQMDITDINTPKPKKKQRWTPLE. A phosphoserine mark is found at serine 4 and serine 6. A Stop-transfer sequence motif is present at residues 16–23; that stretch reads PKPKKKQR. Residues 29-51 traverse the membrane as a helical; Signal-anchor for type II membrane protein segment; that stretch reads ISLSVLVLLLTIIAVTMIALYAT. The Extracellular portion of the chain corresponds to 52-750; that stretch reads YDDGICKSSD…MNPEKKCRVW (699 aa). The Peptidase M13 domain maps to 56–750; it reads ICKSSDCIKS…MNPEKKCRVW (695 aa). Intrachain disulfides connect cysteine 57/cysteine 62, cysteine 80/cysteine 735, cysteine 88/cysteine 695, cysteine 143/cysteine 411, cysteine 234/cysteine 242, and cysteine 621/cysteine 747. Residue arginine 103 coordinates a peptide. An N-linked (GlcNAc...) asparagine glycan is attached at asparagine 145. 2 N-linked (GlcNAc...) asparagine glycosylation sites follow: asparagine 285 and asparagine 325. Residue histidine 584 participates in Zn(2+) binding. Residue glutamate 585 is part of the active site. Histidine 588 lines the Zn(2+) pocket. Residue asparagine 628 is glycosylated (N-linked (GlcNAc...) asparagine). Glutamate 647 is a Zn(2+) binding site. The active-site Proton donor is aspartate 651.

Belongs to the peptidase M13 family. Requires Zn(2+) as cofactor. Post-translationally, myristoylation is a determinant of membrane targeting. Glycosylation at Asn-628 is necessary both for surface expression and neutral endopeptidase activity.

It localises to the cell membrane. It carries out the reaction Preferential cleavage of polypeptides between hydrophobic residues, particularly with Phe or Tyr at P1'.. The enzyme catalyses substance P + H2O = substance P(1-9) + L-Leu-L-Met-NH2. It catalyses the reaction substance P + H2O = substance P(1-7) + L-Phe-Gly-L-Leu-L-Met-NH2. The catalysed reaction is neurotensin + H2O = neurotensin(1-11) + L-isoleucyl-L-leucine. It carries out the reaction neurotensin + H2O = neurotensin(1-10) + L-tyrosyl-L-isoleucyl-L-leucine. Inhibited in a dose dependent manner by opiorphin. Activated by K49-P1-20, a twenty-residue synthetic peptide shortened from the snake B.asper myotoxin II. Its function is as follows. Thermolysin-like specificity, but is almost confined on acting on polypeptides of up to 30 amino acids. Biologically important in the destruction of opioid peptides such as Met- and Leu-enkephalins by cleavage of a Gly-Phe bond. Catalyzes cleavage of bradykinin, substance P and neurotensin peptides. Able to cleave angiotensin-1, angiotensin-2 and angiotensin 1-9. Involved in the degradation of atrial natriuretic factor (ANF) and brain natriuretic factor (BNP(1-32)). Displays UV-inducible elastase activity toward skin preelastic and elastic fibers. The sequence is that of Neprilysin from Homo sapiens (Human).